The sequence spans 141 residues: uncharacterized protein (141 aa).

Helical transmembrane passes span 7–24 (YRIP…FLSP), 39–56 (FLKF…HRGI), 69–91 (FYLI…ILGF), and 116–138 (FFIL…SSFI).

The protein localises to the cell membrane. This is an uncharacterized protein from Aquifex aeolicus (strain VF5).